Here is a 631-residue protein sequence, read N- to C-terminus: Transcription factor dibT (631 aa).

Residues 11–38 (CWTCRLRRKRCDSVQPVCGSCQSLEITC) constitute a DNA-binding region (zn(2)-C6 fungal-type). Residues 123–144 (SLADSSASTPSTSSGRPTTLRS) are compositionally biased toward low complexity. Disordered regions lie at residues 123–148 (SLAD…SVDR) and 469–488 (GLKD…TSAG).

It localises to the nucleus. Its function is as follows. Transcription factor; part of the gene cluster that mediates the biosynthesis of pestalotiollide B which is part of dibenzodioxocinones, a novel class of inhibitors against cholesterol ester transfer protein (CEPT). Acts as the key transcription factor within the cluster and positively regulates the expression of the cluster genes and the subsequent production of dibenzodioxocinones such as pestalotiollide B, pestalotiollide C, 1',2'-dehydropenicillide, 3'-methoxy-1',2'-dehydropenicillide and 1',2'-epoxy-3',4'-didehydropenicillide. Required for the expression of most PKS genes outside of the dibenzodioxocinones cluster, (43 out of 48 defined PKS genes), and promotes pigmentation of the mycelium and conidia. The sequence is that of Transcription factor dibT from Pestalotiopsis microspora.